The chain runs to 424 residues: Sulfatase ppz1 (424 aa).

3 residues coordinate Ca(2+): Asp13, Asp203, and Asn204.

The protein belongs to the sulfatase family. Ca(2+) is required as a cofactor.

Its function is as follows. Sulfatase; part of the gene cluster that mediates the biosynthesis of pyrrolopyrazines, secondary metabolites showing insecticidal activity. The role of ppz1 within the pathway has still to be determined. The single multifunctional NRPS ppzA is sufficient to produce peramine via condensation of 1-pyrroline-5-carboxylate and arginine, N-methylation of the alpha-amino group of arginine and reduction of the thioester and the cyclization to form an iminium ion resulting in release from the peptide synthetase. Deprotonation of this intermediate and oxidation of the pyrroline ring would give rise to peramine. In Epichloe species that produce only peramine, the peramine synthetase gene is not localized in a gene cluster, in contrast to Metarhizium species that contain additional pyrrolopyrazine biosynthesis genes. The 2-oxoglutarate-Fe(II) type oxidoreductase ppzC hydroxylates peramine to yield the newly identified compound 8-hydroxyperamine whereas ppzD converts L-proline into trans-4-hydroxy-L-proline, a precursor of peramine biosynthesis. The sequence is that of Sulfatase ppz1 from Metarhizium majus (strain ARSEF 297).